We begin with the raw amino-acid sequence, 532 residues long: Pentatricopeptide repeat-containing protein At4g02820, mitochondrial (532 aa).

The N-terminal 28 residues, 1 to 28 (MNKNMLVRSARPTLASIHRLFSAAAAAT), are a transit peptide targeting the mitochondrion. The disordered stretch occupies residues 35 to 56 (PVVKPRSGGGKGGESANKKETV). PPR repeat units lie at residues 161–195 (GHAA…GFLK), 196–226 (SCLP…LKIR), 230–264 (DIVT…KLNP), 265–295 (DWVT…MEKL), 300–330 (NRVA…VKSS), 335–365 (NDAE…WESV), 370–404 (DARI…GINP), 405–435 (SYST…AIDS), 442–472 (NVRL…LQKA), and 476–512 (NTQL…DEET).

This sequence belongs to the PPR family. P subfamily.

Its subcellular location is the mitochondrion. The chain is Pentatricopeptide repeat-containing protein At4g02820, mitochondrial from Arabidopsis thaliana (Mouse-ear cress).